Reading from the N-terminus, the 285-residue chain is D-apionate oxidoisomerase (285 aa).

Residues glycine 15–methionine 17, glutamate 36, and aspartate 71 contribute to the NAD(+) site. Residues histidine 116 and glutamate 186 each coordinate Zn(2+).

The protein belongs to the ApnO family. Requires Zn(2+) as cofactor.

The enzyme catalyses D-apionate + NAD(+) = 3-oxoisoapionate + NADH + H(+). It participates in carbohydrate metabolism. In terms of biological role, involved in catabolism of D-apiose. Catalyzes the conversion of D-apionate to 3-oxo-isoapionate. The sequence is that of D-apionate oxidoisomerase from Pectobacterium atrosepticum (strain SCRI 1043 / ATCC BAA-672) (Erwinia carotovora subsp. atroseptica).